The primary structure comprises 178 residues: Cytochrome b6-f complex iron-sulfur subunit 2 (178 aa).

Residues 17-36 (LLNFFTGAIVAATASAAIYP) traverse the membrane as a helical segment. Residues 61–161 (GHPIPASQIL…VQVKDDYIWI (101 aa)) form the Rieske domain. 4 residues coordinate [2Fe-2S] cluster: Cys-107, His-109, Cys-125, and His-128. Cys-112 and Cys-127 form a disulfide bridge.

The protein belongs to the Rieske iron-sulfur protein family. In terms of assembly, the 4 large subunits of the cytochrome b6-f complex are cytochrome b6, subunit IV (17 kDa polypeptide, PetD), cytochrome f and the Rieske protein, while the 4 small subunits are PetG, PetL, PetM and PetN. The complex functions as a dimer. [2Fe-2S] cluster is required as a cofactor.

It is found in the cellular thylakoid membrane. The catalysed reaction is 2 oxidized [plastocyanin] + a plastoquinol + 2 H(+)(in) = 2 reduced [plastocyanin] + a plastoquinone + 4 H(+)(out). In terms of biological role, component of the cytochrome b6-f complex, which mediates electron transfer between photosystem II (PSII) and photosystem I (PSI), cyclic electron flow around PSI, and state transitions. In Trichormus variabilis (strain ATCC 29413 / PCC 7937) (Anabaena variabilis), this protein is Cytochrome b6-f complex iron-sulfur subunit 2.